The primary structure comprises 149 residues: Sperm surface protein Sp17 (149 aa).

Residues 83–96 are compositionally biased toward basic and acidic residues; that stretch reads CEQELAKSSGREET. The interval 83–114 is disordered; the sequence is CEQELAKSSGREETPVTPFEESTEEEREQEEA. A compositionally biased stretch (acidic residues) spans 103-113; sequence ESTEEEREQEE. Positions 112–141 constitute an IQ domain; sequence EEAAALKIQSLFRGHVAREEVKKMKSDKNE.

In terms of assembly, homodimer. May interact with ROPN1. In terms of tissue distribution, testis- and sperm-specific.

It is found in the membrane. Sperm surface zona pellucida binding protein. Helps to bind spermatozoa to the zona pellucida with high affinity. Might function in binding zona pellucida and carbohydrates. The protein is Sperm surface protein Sp17 (Spa17) of Mus musculus (Mouse).